The chain runs to 175 residues: Outer membrane protein assembly factor BamE (175 aa).

An N-terminal signal peptide occupies residues 1 to 21 (MQNTKLLLTSFTFVGLLALAG). The N-palmitoyl cysteine moiety is linked to residue Cys-22. Residue Cys-22 is the site of S-diacylglycerol cysteine attachment. 2 disordered regions span residues 117 to 147 (ALLG…KPGS) and 156 to 175 (IDNV…TSPQ).

This sequence belongs to the BamE family. In terms of assembly, part of the Bam complex.

The protein resides in the cell outer membrane. Its function is as follows. Part of the outer membrane protein assembly complex, which is involved in assembly and insertion of beta-barrel proteins into the outer membrane. May have a structural role in maintaining the cell envelope integrity. This Pseudomonas fluorescens protein is Outer membrane protein assembly factor BamE.